Reading from the N-terminus, the 538-residue chain is Casein kinase I homolog 1 (538 aa).

Residues 39-61 (SPARSSMTATTAANSNSNSSRDD) are disordered. A compositionally biased stretch (low complexity) spans 41 to 57 (ARSSMTATTAANSNSNS). The region spanning 69-353 (YKIGKKIGEG…ETADGQYDWM (285 aa)) is the Protein kinase domain. ATP is bound by residues 75-83 (IGEGSFGVL) and Lys98. The active-site Proton acceptor is Asp188. Disordered stretches follow at residues 366 to 428 (NKKP…KPKL) and 474 to 527 (QQQL…LAAS). Composition is skewed to low complexity over residues 391–410 (QLQM…QQQQ) and 474–498 (QQQL…QFGA). Phosphoserine occurs at positions 522, 523, and 527. Residues Cys537 and Cys538 are each lipidated (S-palmitoyl cysteine).

Belongs to the protein kinase superfamily. CK1 Ser/Thr protein kinase family. Casein kinase I subfamily. Palmitoylated by AKR1.

It localises to the cell membrane. The protein resides in the mitochondrion membrane. The catalysed reaction is L-seryl-[protein] + ATP = O-phospho-L-seryl-[protein] + ADP + H(+). It catalyses the reaction L-threonyl-[protein] + ATP = O-phospho-L-threonyl-[protein] + ADP + H(+). In terms of biological role, casein kinases are operationally defined by their preferential utilization of acidic proteins such as caseins as substrates. The polypeptide is Casein kinase I homolog 1 (YCK1) (Saccharomyces cerevisiae (strain ATCC 204508 / S288c) (Baker's yeast)).